We begin with the raw amino-acid sequence, 265 residues long: 5'-nucleotidase SurE (265 aa).

Aspartate 8, aspartate 9, serine 39, and asparagine 96 together coordinate a divalent metal cation.

This sequence belongs to the SurE nucleotidase family. Requires a divalent metal cation as cofactor.

The protein localises to the cytoplasm. It carries out the reaction a ribonucleoside 5'-phosphate + H2O = a ribonucleoside + phosphate. In terms of biological role, nucleotidase that shows phosphatase activity on nucleoside 5'-monophosphates. This Dehalococcoides mccartyi (strain ATCC BAA-2266 / KCTC 15142 / 195) (Dehalococcoides ethenogenes (strain 195)) protein is 5'-nucleotidase SurE.